Reading from the N-terminus, the 461-residue chain is Glutamate-gated chloride channel alpha (461 aa).

The first 20 residues, 1–20 (MATWIVGKLIIASLILGIQA), serve as a signal peptide directing secretion. Residues 21–275 (QQARTKSQDI…TTIQLKREFS (255 aa)) are Extracellular-facing. 3 residues coordinate L-glutamate: arginine 98, arginine 117, and serine 182. A disulfide bridge connects residues cysteine 191 and cysteine 205. Serine 211 provides a ligand contact to L-glutamate. The N-linked (GlcNAc...) asparagine glycan is linked to asparagine 246. A disulfide bridge connects residues cysteine 252 and cysteine 263. A helical membrane pass occupies residues 276-298 (FYLLQLYIPSCMLVIVSWVSFWF). Residues 299–303 (DRTAI) lie on the Cytoplasmic side of the membrane. The chain crosses the membrane as a helical span at residues 304–325 (PARVTLGVTTLLTMTAQSAGIN). Topologically, residues 326-332 (SQLPPVS) are extracellular. Residues 333 to 353 (YIKAIDVWIGACMTFIFCALL) traverse the membrane as a helical segment. The Cytoplasmic segment spans residues 354–432 (EFALVNHIAN…EWNDISKRVD (79 aa)). The helical transmembrane segment at 433–454 (LISRALFPVLFFVFNILYWSRF) threads the bilayer. Over 455–461 (GQQNVLF) the chain is Extracellular.

It belongs to the ligand-gated ion channel (TC 1.A.9) family. Glutamate-gated chloride channel (TC 1.A.9.4) subfamily. As to quaternary structure, pentamer. Homooligomer, forms functional heterooligomers with glc-2.

The protein resides in the postsynaptic cell membrane. It localises to the cell membrane. Functionally, glutamate-gated chloride channel subunit; channel properties depend on the subunit composition. Glutamate binding triggers a rapidly reversible current in heteromeric channels formed by glc-1 and glc-2, while the anti-helmintic drug ivermectin and other avermectins trigger a permanently open channel configuration. Channels containing only glc-1 are activated by ivermectin, but not by glutamate alone (in vitro). The heteromeric channel formed by glc-1 and glc-2 is also activated by ibotenate, and it is blocked by picrotoxin and flufenamic acid. Plays a role in the regulation of locomotor behavior. This chain is Glutamate-gated chloride channel alpha, found in Caenorhabditis elegans.